We begin with the raw amino-acid sequence, 395 residues long: Phosphopentomutase (395 aa).

The Mn(2+) site is built by Asp-16, Asp-289, His-294, Asp-330, His-331, and His-342.

This sequence belongs to the phosphopentomutase family. It depends on Mn(2+) as a cofactor.

It is found in the cytoplasm. It carries out the reaction 2-deoxy-alpha-D-ribose 1-phosphate = 2-deoxy-D-ribose 5-phosphate. It catalyses the reaction alpha-D-ribose 1-phosphate = D-ribose 5-phosphate. It participates in carbohydrate degradation; 2-deoxy-D-ribose 1-phosphate degradation; D-glyceraldehyde 3-phosphate and acetaldehyde from 2-deoxy-alpha-D-ribose 1-phosphate: step 1/2. Its function is as follows. Isomerase that catalyzes the conversion of deoxy-ribose 1-phosphate (dRib-1-P) and ribose 1-phosphate (Rib-1-P) to deoxy-ribose 5-phosphate (dRib-5-P) and ribose 5-phosphate (Rib-5-P), respectively. This chain is Phosphopentomutase, found in Geobacillus kaustophilus (strain HTA426).